We begin with the raw amino-acid sequence, 396 residues long: G-protein coupled receptor 84 (396 aa).

The Extracellular portion of the chain corresponds to 1-26; that stretch reads MWNASDVNFSCYHESVLGYRYVAVSW. 2 N-linked (GlcNAc...) asparagine glycosylation sites follow: N3 and N8. The helical transmembrane segment at 27 to 47 threads the bilayer; sequence GIVVAVTGTVGNVLTLLALAI. Topologically, residues 48 to 57 are cytoplasmic; that stretch reads QPKLRTRFNL. A helical transmembrane segment spans residues 58–78; sequence LIANLTVADLLYCTLLQPFSV. Over 79 to 94 the chain is Extracellular; that stretch reads DTYLHLHWRTGATFCQ. The chain crosses the membrane as a helical span at residues 95-115; it reads IFGFLLFVSNSVSILTLCLIA. Topologically, residues 116–144 are cytoplasmic; the sequence is LGRYLLIAHPKLFPQVFSAKGIVLALVST. The helical transmembrane segment at 145 to 165 threads the bilayer; sequence WVVAVASFAPLWPIYILVPVV. Topologically, residues 166–180 are extracellular; sequence CTCSFDRIRGQPYTT. The helical transmembrane segment at 181–201 threads the bilayer; that stretch reads ILMGIYFVVGLSSVGVFYCLI. At 202–320 the chain is on the cytoplasmic side; that stretch reads HQQVKRAAQA…PSEFGKVTRM (119 aa). S221 and S224 each carry phosphoserine. A disordered region spans residues 243-310; it reads SGLASGGPSE…TKGAQRAQDS (68 aa). T263 and T264 each carry phosphothreonine. The chain crosses the membrane as a helical span at residues 321-341; that stretch reads CFAVFLCFTLSYIPFLLLNIL. Residues 342–352 lie on the Extracellular side of the membrane; that stretch reads DAKVQAPRVVH. The helical transmembrane segment at 353 to 373 threads the bilayer; it reads MLAANLTWLNGCINPVLYAAM. Topologically, residues 374–396 are cytoplasmic; sequence NRQFRQAYGSLLRRGPQSFHRFH.

The protein belongs to the G-protein coupled receptor 1 family. In terms of assembly, interacts with ARRB2 and ARR3. Phosphorylated by a subset of GPR84-activating ligands. Constitutively phosphorylated at Ser-221 and Ser-224 in the absence of 2-HTP. By contrast, Thr-263 and Thr-264 are phosphorylated only following prior cell treatment with 2-HTP.

Its subcellular location is the cell membrane. In terms of biological role, g protein-coupled receptor that responds endogenously to dietary fatty acids or nutrient, specifically medium-chain free fatty acid (FFA) with carbon chain lengths of C9 to C14. Capric acid (C10:0), undecanoic acid (C11:0) and lauric acid (C12:0) are the most potent agonists. In immune cells, functions as a pro-inflammatory receptor via 6-OAU and promotes the expression of pro-inflammatory mediators such as TNFalpha, IL-6 and IL-12B as well as stimulating chemotactic responses through activation of signaling mediators AKT, ERK and NF-kappa-B. In addition, triggers increased bacterial adhesion and phagocytosis in macrophages and regulates pro-inflammatory function via enhancing NLRP3 inflammasome activation. Also plays an important role in inflammation by modulating neutrophil functions. Mechanistically, promotes neutrophil chemotaxis, reactive oxygen species (ROS) production and degranulation via LYN-AKT/ERK pathway. To regulate ROS, communicates with the two formyl peptide receptors FPR2 and FPR1 to control the NADPH oxidase activity in neutrophils. The sequence is that of G-protein coupled receptor 84 (GPR84) from Bos taurus (Bovine).